The sequence spans 40 residues: ASGSDENDVVVIGGGPGGYVAAIKAAQLGLKTTXIEKRGT.

FAD is bound at residue 36-40; sequence EKRGT.

This sequence belongs to the class-I pyridine nucleotide-disulfide oxidoreductase family. In terms of assembly, homodimer. FAD is required as a cofactor.

Its subcellular location is the mitochondrion matrix. The catalysed reaction is N(6)-[(R)-dihydrolipoyl]-L-lysyl-[protein] + NAD(+) = N(6)-[(R)-lipoyl]-L-lysyl-[protein] + NADH + H(+). Functionally, lipoamide dehydrogenase is a component of the glycine cleavage system as well as of the alpha-ketoacid dehydrogenase complexes. The pyruvate dehydrogenase complex contains multiple copies of three enzymatic components: pyruvate dehydrogenase (E1), dihydrolipoamide acetyltransferase (E2) and lipoamide dehydrogenase (E3). The protein is Dihydrolipoyl dehydrogenase of Solanum tuberosum (Potato).